The chain runs to 681 residues: Peroxisomal acyl-coenzyme A oxidase 2 (681 aa).

Phosphoserine is present on residues serine 3 and serine 9. Lysine 66, lysine 137, lysine 303, lysine 453, lysine 561, and lysine 667 each carry N6-succinyllysine. The short motif at 679-681 (HKM) is the Microbody targeting signal element.

This sequence belongs to the acyl-CoA oxidase family. Homodimer. It depends on FAD as a cofactor. As to expression, most abundant in liver. Also expressed in kidney. Not present in any other tissues tested.

It is found in the peroxisome. The enzyme catalyses (25R)-3alpha,7alpha,12alpha-trihydroxy-5beta-cholestan-26-oyl-CoA + A + H2O = (24R,25R)-3alpha,7alpha,12alpha,24-tetrahydroxy-5beta-cholestan-26-oyl-CoA + AH2. The catalysed reaction is (25S)-3alpha,7alpha,12alpha-trihydroxy-5beta-cholestan-26-oyl-CoA + O2 = (24E)-3alpha,7alpha,12alpha-trihydroxy-5beta-cholest-24-en-26-oyl-CoA + H2O2. Oxidizes the CoA esters of the bile acid intermediates di- and tri-hydroxycoprostanic acids. Capable of oxidizing short as well as long chain 2-methyl branched fatty acids. In Rattus norvegicus (Rat), this protein is Peroxisomal acyl-coenzyme A oxidase 2.